The following is a 445-amino-acid chain: uncharacterized protein (445 aa).

His66 is a Zn(2+) binding site. Catalysis depends on Glu69, which acts as the Proton acceptor. Residues His70 and Glu146 each coordinate Zn(2+). Residues 232 to 251 form a disordered region; the sequence is GRQSAPPRKSTGRINGGPAL.

Belongs to the peptidase M16 family. The cofactor is Zn(2+).

This is an uncharacterized protein from Mycobacterium leprae (strain TN).